We begin with the raw amino-acid sequence, 957 residues long: Valine--tRNA ligase (957 aa).

The short motif at 47 to 57 (PNITGQLHLGH) is the 'HIGH' region element. Positions 558–562 (KMSKS) match the 'KMSKS' region motif. Residue lysine 561 participates in ATP binding. The stretch at 889 to 918 (FNKENEINRLKKESELINRKIETIQKLLDD) forms a coiled coil.

This sequence belongs to the class-I aminoacyl-tRNA synthetase family. ValS type 1 subfamily. Monomer.

The protein resides in the cytoplasm. It catalyses the reaction tRNA(Val) + L-valine + ATP = L-valyl-tRNA(Val) + AMP + diphosphate. Its function is as follows. Catalyzes the attachment of valine to tRNA(Val). As ValRS can inadvertently accommodate and process structurally similar amino acids such as threonine, to avoid such errors, it has a 'posttransfer' editing activity that hydrolyzes mischarged Thr-tRNA(Val) in a tRNA-dependent manner. In Blochmanniella pennsylvanica (strain BPEN), this protein is Valine--tRNA ligase.